A 134-amino-acid chain; its full sequence is Large ribosomal subunit protein bL20 (134 aa).

Belongs to the bacterial ribosomal protein bL20 family.

Its function is as follows. Binds directly to 23S ribosomal RNA and is necessary for the in vitro assembly process of the 50S ribosomal subunit. It is not involved in the protein synthesizing functions of that subunit. The sequence is that of Large ribosomal subunit protein bL20 from Rhizobium meliloti (strain 1021) (Ensifer meliloti).